A 73-amino-acid polypeptide reads, in one-letter code: V-type proton ATPase subunit e (73 aa).

Topologically, residues 1–3 are lumenal; that stretch reads MSS. Residues 4-24 traverse the membrane as a helical segment; the sequence is FYTVVGVFIVVSAMSVLFWIM. Residues 25–35 are Cytoplasmic-facing; that stretch reads APKNNQAVWRS. The chain crosses the membrane as a helical span at residues 36–56; that stretch reads TVILTLAMMFLMWAITFLCQL. Topologically, residues 57-73 are lumenal; sequence HPLVAPRRSDLRPEFAE.

This sequence belongs to the V-ATPase e1/e2 subunit family. As to quaternary structure, V-ATPase is a heteromultimeric enzyme composed of a peripheral catalytic V1 complex (components A to H) attached to an integral membrane V0 proton pore complex (components: a, c, c', c'', d, e, f and VOA1).

The protein localises to the vacuole membrane. In terms of biological role, subunit of the V0 complex of vacuolar(H+)-ATPase (V-ATPase), a multisubunit enzyme composed of a peripheral complex (V1) that hydrolyzes ATP and a membrane integral complex (V0) that translocates protons. V-ATPase is responsible for acidifying and maintaining the pH of intracellular compartments. This is V-type proton ATPase subunit e (VMA9) from Saccharomyces cerevisiae (strain ATCC 204508 / S288c) (Baker's yeast).